The chain runs to 156 residues: Endoribonuclease YbeY (156 aa).

Zn(2+) is bound by residues histidine 115, histidine 119, and histidine 125.

This sequence belongs to the endoribonuclease YbeY family. Requires Zn(2+) as cofactor.

It is found in the cytoplasm. Its function is as follows. Single strand-specific metallo-endoribonuclease involved in late-stage 70S ribosome quality control and in maturation of the 3' terminus of the 16S rRNA. This chain is Endoribonuclease YbeY, found in Mannheimia succiniciproducens (strain KCTC 0769BP / MBEL55E).